The chain runs to 328 residues: Glyoxylate reductase/hydroxypyruvate reductase (328 aa).

Serine 36 carries the phosphoserine modification. Residue 83–84 (VG) coordinates substrate. NADP(+) contacts are provided by residues 162-164 (GRI), 185-188 (RQPR), serine 217, and isoleucine 243. Residues arginine 245, aspartate 269, and 293 to 296 (HIGS) contribute to the substrate site. Histidine 293 (proton donor) is an active-site residue. Glycine 295 contributes to the NADP(+) binding site. Threonine 298 carries the phosphothreonine modification.

It belongs to the D-isomer specific 2-hydroxyacid dehydrogenase family. In terms of assembly, homodimer.

The catalysed reaction is glycolate + NADP(+) = glyoxylate + NADPH + H(+). The enzyme catalyses (R)-glycerate + NAD(+) = 3-hydroxypyruvate + NADH + H(+). It carries out the reaction (R)-glycerate + NADP(+) = 3-hydroxypyruvate + NADPH + H(+). Its function is as follows. Enzyme with hydroxy-pyruvate reductase, glyoxylate reductase and D-glycerate dehydrogenase enzymatic activities. Reduces hydroxypyruvate to D-glycerate, glyoxylate to glycolate oxidizes D-glycerate to hydroxypyruvate. This Mus musculus (Mouse) protein is Glyoxylate reductase/hydroxypyruvate reductase (Grhpr).